The primary structure comprises 133 residues: Antifungal protein ginkbilobin-like protein 1 (133 aa).

An N-terminal signal peptide occupies residues 1–24 (MSMGSFGFALAVMVLAVLVASAAG). Residues 28–133 (TNFVSSACNT…CFIRYEQYSI (106 aa)) form the Gnk2-homologous domain. Disulfide bonds link Cys35–Cys111, Cys87–Cys96, and Cys99–Cys124. Alpha-D-mannopyranose is bound at residue Asn36. Positions 118 and 129 each coordinate alpha-D-mannopyranose.

Its function is as follows. Exerts antifungal activity through its carbohydrate-binding specificity. The chain is Antifungal protein ginkbilobin-like protein 1 from Picea sitchensis (Sitka spruce).